The primary structure comprises 29 residues: Cyclotide mden-A (29 aa).

The segment at residues glycine 1–asparagine 29 is a cross-link (cyclopeptide (Gly-Asn)). 3 disulfide bridges follow: cysteine 5-cysteine 19, cysteine 9-cysteine 21, and cysteine 14-cysteine 26.

Belongs to the cyclotide family. Moebius subfamily. Post-translationally, this is a cyclic peptide.

Its function is as follows. Probably participates in a plant defense mechanism. The protein is Cyclotide mden-A of Melicytus dentatus (Tree violet).